We begin with the raw amino-acid sequence, 435 residues long: Trigger factor (435 aa).

The 81-residue stretch at 183-263 (GDFINVDVTI…VKTIWQGNMP (81 aa)) folds into the PPIase FKBP-type domain.

It belongs to the FKBP-type PPIase family. Tig subfamily.

The protein resides in the cytoplasm. The enzyme catalyses [protein]-peptidylproline (omega=180) = [protein]-peptidylproline (omega=0). Functionally, involved in protein export. Acts as a chaperone by maintaining the newly synthesized protein in an open conformation. Functions as a peptidyl-prolyl cis-trans isomerase. This Protochlamydia amoebophila (strain UWE25) protein is Trigger factor.